Here is a 370-residue protein sequence, read N- to C-terminus: Arginine kinase (370 aa).

One can recognise a Phosphagen kinase N-terminal domain in the interval 6 to 89; sequence QKKYPAKDDF…FDPVIEEYHN (84 aa). The 244-residue stretch at 115–358 folds into the Phosphagen kinase C-terminal domain; sequence YVISSRVRTG…KVLIEMEKKL (244 aa). Residues 118-122 and histidine 181 contribute to the ATP site; that span reads SSRVR. Glutamate 222 contributes to the substrate binding site. Arginine 226 contacts ATP. Cysteine 274 is a binding site for substrate. Residues 283 to 287 and 311 to 316 each bind ATP; these read RCSVH and RGTSGE. Substrate is bound at residue glutamate 316.

Belongs to the ATP:guanido phosphotransferase family. In terms of assembly, homodimer. The N-terminus is blocked.

It carries out the reaction L-arginine + ATP = N(omega)-phospho-L-arginine + ADP + H(+). The protein is Arginine kinase (AK) of Stichopus japonicus (Sea cucumber).